The following is a 453-amino-acid chain: Allantoinase (453 aa).

Residues His59, His61, Lys146, His186, His242, and Asp315 each contribute to the Zn(2+) site. Lys146 bears the N6-carboxylysine mark.

This sequence belongs to the metallo-dependent hydrolases superfamily. Allantoinase family. In terms of assembly, homotetramer. The cofactor is Zn(2+). Post-translationally, carboxylation allows a single lysine to coordinate two zinc ions.

It carries out the reaction (S)-allantoin + H2O = allantoate + H(+). The protein operates within nitrogen metabolism; (S)-allantoin degradation; allantoate from (S)-allantoin: step 1/1. Functionally, catalyzes the conversion of allantoin (5-ureidohydantoin) to allantoic acid by hydrolytic cleavage of the five-member hydantoin ring. This Salmonella paratyphi B (strain ATCC BAA-1250 / SPB7) protein is Allantoinase.